A 73-amino-acid polypeptide reads, in one-letter code: Conotoxin im23b (73 aa).

Positions 1–22 (MIMRMTLTLFVLVVMTAASASG) are cleaved as a signal peptide. Residues 23 to 28 (DALTEA) constitute a propeptide that is removed on maturation. Disulfide bonds link Cys-34-Cys-41, Cys-45-Cys-55, and Cys-56-Cys-71.

This sequence belongs to the conotoxin K superfamily. Expressed by the venom duct.

The protein resides in the secreted. Neurotoxin that induces excitatory symptoms in mice following intracranial administration. No symptoms are observed after intraperitoneal and intravenous (tail vein) injections. The sequence is that of Conotoxin im23b from Conus imperialis (Imperial cone).